Here is a 484-residue protein sequence, read N- to C-terminus: Carbohydrate sulfotransferase 7 (484 aa).

Over 1 to 12 the chain is Cytoplasmic; it reads MKGRRRRRREYC. Residues 13 to 33 form a helical; Signal-anchor for type II membrane protein membrane-spanning segment; the sequence is KFTLLLALYTLLLLLVPSVLD. The Lumenal segment spans residues 34–484; that stretch reads SHSEQDKGRN…PLETKANWAV (451 aa). Positions 71-90 are disordered; it reads RSLAEGNPDRSPGSPGNLSA. Asparagine 87 carries N-linked (GlcNAc...) asparagine glycosylation. A 3'-phosphoadenylyl sulfate-binding site is contributed by 108 to 114; sequence WRTGSSF. N-linked (GlcNAc...) asparagine glycosylation is present at asparagine 184. 276–284 is a 3'-phosphoadenylyl sulfate binding site; sequence RDPRAVHNS. Residue asparagine 405 is glycosylated (N-linked (GlcNAc...) asparagine). The residue at position 460 (serine 460) is a Phosphoserine. The segment covering 460–473 has biased composition (basic and acidic residues); the sequence is SGDERDRKTVREGE. The interval 460–484 is disordered; that stretch reads SGDERDRKTVREGETPLETKANWAV.

Belongs to the sulfotransferase 1 family. Gal/GlcNAc/GalNAc subfamily. Widely expressed. Highly expressed in kidney. Expressed at lower level in heart, lung and liver.

It localises to the golgi apparatus membrane. The catalysed reaction is chondroitin beta-D-glucuronate + n 3'-phosphoadenylyl sulfate = chondroitin 6'-sulfate + n adenosine 3',5'-bisphosphate + n H(+). Functionally, sulfotransferase that utilizes 3'-phospho-5'-adenylyl sulfate (PAPS) as sulfonate donor to catalyze the transfer of sulfate to position 6 of non-reducing N-acetylglucosamine (GlcNAc) residues. Preferentially acts on mannose-linked GlcNAc. Also able to catalyze the transfer of sulfate to position 6 of the N-acetylgalactosamine (GalNAc) residue of chondroitin. Also acts on core 2 mucin-type oligosaccharide and N-acetyllactosamine oligomer with a lower efficiency. Has weak or no activity toward keratan sulfate and oligosaccharides containing the Galbeta1-4GlcNAc. Catalyzes 6-O-sulfation of beta-benzyl GlcNAc but not alpha- or beta-benzyl GalNAc. The protein is Carbohydrate sulfotransferase 7 (Chst7) of Mus musculus (Mouse).